Consider the following 193-residue polypeptide: Ribonuclease HII (193 aa).

The 179-residue stretch at 15 to 193 (YIVAGIDEAG…PYHRRSFKCC (179 aa)) folds into the RNase H type-2 domain. A divalent metal cation-binding residues include D21, E22, and D112.

This sequence belongs to the RNase HII family. It depends on Mn(2+) as a cofactor. Requires Mg(2+) as cofactor.

It is found in the cytoplasm. The enzyme catalyses Endonucleolytic cleavage to 5'-phosphomonoester.. Functionally, endonuclease that specifically degrades the RNA of RNA-DNA hybrids. The protein is Ribonuclease HII of Rickettsia felis (strain ATCC VR-1525 / URRWXCal2) (Rickettsia azadi).